Here is a 152-residue protein sequence, read N- to C-terminus: MFRGATLVNLDSKGRLSVPTRYREQLLENAAGQMVCTIDIHHPCLLLYPLPEWEIIEQKLSRLLSMNPVERRVQRLLLGHASECQMDGAGRLLIAPVLRQHAGLTKEVMLVGQFNKFELWDETTWHQQVKEDIDAEQLATGDLSERLQDLSL.

SpoVT-AbrB domains are found at residues 5-52 (ATLV…PLPE) and 81-124 (ASEC…DETT).

This sequence belongs to the MraZ family. As to quaternary structure, forms oligomers.

It localises to the cytoplasm. The protein localises to the nucleoid. Functionally, negatively regulates its own expression and that of the subsequent genes in the proximal part of the division and cell wall (dcw) gene cluster. Acts by binding directly to DNA. May also regulate the expression of genes outside the dcw cluster. This chain is Transcriptional regulator MraZ, found in Shigella flexneri serotype 5b (strain 8401).